The following is a 430-amino-acid chain: Adenylosuccinate synthetase (430 aa).

GTP-binding positions include 13 to 19 (GDEGKGK) and 41 to 43 (GHT). Asp14 functions as the Proton acceptor in the catalytic mechanism. Positions 14 and 41 each coordinate Mg(2+). IMP is bound by residues 14-17 (DEGK), 39-42 (NAGH), Thr130, Arg144, Gln225, Thr240, and Arg304. The active-site Proton donor is His42. 300-306 (ASTGRPR) contacts substrate. Residues Arg306, 332-334 (KLD), and 414-416 (STG) each bind GTP.

It belongs to the adenylosuccinate synthetase family. Homodimer. Mg(2+) is required as a cofactor.

It localises to the cytoplasm. It catalyses the reaction IMP + L-aspartate + GTP = N(6)-(1,2-dicarboxyethyl)-AMP + GDP + phosphate + 2 H(+). It participates in purine metabolism; AMP biosynthesis via de novo pathway; AMP from IMP: step 1/2. Plays an important role in the de novo pathway of purine nucleotide biosynthesis. Catalyzes the first committed step in the biosynthesis of AMP from IMP. This is Adenylosuccinate synthetase from Xanthomonas campestris pv. campestris (strain 8004).